Reading from the N-terminus, the 302-residue chain is Homoserine O-acetyltransferase (302 aa).

Catalysis depends on cysteine 142, which acts as the Acyl-thioester intermediate. Positions 163 and 192 each coordinate substrate. Histidine 235 functions as the Proton acceptor in the catalytic mechanism. Residue glutamate 237 is part of the active site. Arginine 249 provides a ligand contact to substrate.

This sequence belongs to the MetA family.

Its subcellular location is the cytoplasm. The catalysed reaction is L-homoserine + acetyl-CoA = O-acetyl-L-homoserine + CoA. Its pathway is amino-acid biosynthesis; L-methionine biosynthesis via de novo pathway; O-acetyl-L-homoserine from L-homoserine: step 1/1. Functionally, transfers an acetyl group from acetyl-CoA to L-homoserine, forming acetyl-L-homoserine. This Bacillus licheniformis (strain ATCC 14580 / DSM 13 / JCM 2505 / CCUG 7422 / NBRC 12200 / NCIMB 9375 / NCTC 10341 / NRRL NRS-1264 / Gibson 46) protein is Homoserine O-acetyltransferase.